Reading from the N-terminus, the 232-residue chain is Cell surface superoxide dismutase [Cu-Zn] 4 (232 aa).

An N-terminal signal peptide occupies residues 1–15; sequence MKYLSIISIVALALA. Asparagine 53 carries N-linked (GlcNAc...) asparagine glycosylation. Cu cation-binding residues include histidine 75 and histidine 77. Asparagine 86 carries an N-linked (GlcNAc...) asparagine glycan. Histidine 93 is a binding site for Cu cation. Histidine 93 contacts Zn(2+). N-linked (GlcNAc...) asparagine glycosylation occurs at asparagine 98. Aspartate 113 is a Zn(2+) binding site. Asparagine 120 carries an N-linked (GlcNAc...) asparagine glycan. Histidine 153 contacts Cu cation. N-linked (GlcNAc...) asparagine glycosylation is found at asparagine 156, asparagine 164, asparagine 182, asparagine 193, and asparagine 196. The span at 174-208 shows a compositional bias: low complexity; it reads TASAATWSNSSSSSSSSSKNSTNGSSGSSTSASQG. The disordered stretch occupies residues 174-211; it reads TASAATWSNSSSSSSSSSKNSTNGSSGSSTSASQGSGA. Residue serine 209 is the site of GPI-anchor amidated serine attachment. The propeptide at 210 to 232 is removed in mature form; it reads GAGRAEISGFLAAGIAGVVAALI. Position 213 (arginine 213) interacts with substrate.

This sequence belongs to the Cu-Zn superoxide dismutase family. Cu cation is required as a cofactor. Zn(2+) serves as cofactor. In terms of processing, the GPI-anchor is attached to the protein in the endoplasmic reticulum and serves to target the protein to the cell surface. There, the glucosamine-inositol phospholipid moiety is cleaved off and the GPI-modified mannoprotein is covalently attached via its lipidless GPI glycan remnant to the 1,6-beta-glucan of the outer cell wall layer.

Its subcellular location is the secreted. The protein resides in the cell wall. It is found in the membrane. It catalyses the reaction 2 superoxide + 2 H(+) = H2O2 + O2. In terms of biological role, superoxide dismutases serve to convert damaging superoxide radicals, a key form of ROS, to less damaging hydrogen peroxide that can be converted into water by catalase action. Degrades host-derived reactive oxygen species to escape innate immune surveillance. Involved in the occurrence of miconazole-tolerant persisters in biofilms. Persisters are cells that survive high doses of an antimicrobial agent. This is Cell surface superoxide dismutase [Cu-Zn] 4 (SOD4) from Candida albicans (strain SC5314 / ATCC MYA-2876) (Yeast).